A 315-amino-acid polypeptide reads, in one-letter code: Type II restriction enzyme SalI (315 aa).

It catalyses the reaction Endonucleolytic cleavage of DNA to give specific double-stranded fragments with terminal 5'-phosphates.. Functionally, a P subtype restriction enzyme that recognizes the double-stranded sequence 5'-GTCGAC-3' and cleaves after G-1. This chain is Type II restriction enzyme SalI, found in Streptomyces albus G.